The sequence spans 99 residues: DNA-binding protein HmvA (99 aa).

Residues 52-55 (KTIK) are interaction with DNA.

The protein belongs to the archaeal histone HMF family. Homodimer or heterodimer with another histone. Dimers then assemble into higher oligomers, with the DNA wrapped around the protein core.

It localises to the cytoplasm. It is found in the chromosome. Functionally, binds and compact DNA (95 to 150 base pairs) to form nucleosome-like structures that contain positive DNA supercoils. Increases the resistance of DNA to thermal denaturation (in vitro). The sequence is that of DNA-binding protein HmvA (hmvA) from Methanococcus voltae.